Here is a 147-residue protein sequence, read N- to C-terminus: Large ribosomal subunit protein uL13 (147 aa).

It belongs to the universal ribosomal protein uL13 family. Part of the 50S ribosomal subunit.

In terms of biological role, this protein is one of the early assembly proteins of the 50S ribosomal subunit, although it is not seen to bind rRNA by itself. It is important during the early stages of 50S assembly. The chain is Large ribosomal subunit protein uL13 from Rhodococcus opacus (strain B4).